Here is a 467-residue protein sequence, read N- to C-terminus: 55 kDa erythrocyte membrane protein (467 aa).

The region spanning 73–154 is the PDZ domain; the sequence is EVAFEKNQSE…VVTMKIIPRP (82 aa). The region spanning 160–230 is the SH3 domain; it reads PCEMYMRGQF…PSPELQEWRA (71 aa). In terms of domain architecture, Guanylate kinase-like spans 283–452; sequence RKTLVLIGAP…SVKIVEEALE (170 aa).

The protein belongs to the MAGUK family. Post-translationally, extensively palmitoylated.

It is found in the membrane. Functionally, may play a role in the regulation of neutrophil polarization. In Takifugu rubripes (Japanese pufferfish), this protein is 55 kDa erythrocyte membrane protein (mpp1).